Reading from the N-terminus, the 189-residue chain is Protein GrpE (189 aa).

A disordered region spans residues 1 to 21 (MADEQNLDNQNPETPEQSQAD). Residues 7-20 (LDNQNPETPEQSQA) are compositionally biased toward polar residues.

It belongs to the GrpE family. In terms of assembly, homodimer.

It localises to the cytoplasm. Functionally, participates actively in the response to hyperosmotic and heat shock by preventing the aggregation of stress-denatured proteins, in association with DnaK and GrpE. It is the nucleotide exchange factor for DnaK and may function as a thermosensor. Unfolded proteins bind initially to DnaJ; upon interaction with the DnaJ-bound protein, DnaK hydrolyzes its bound ATP, resulting in the formation of a stable complex. GrpE releases ADP from DnaK; ATP binding to DnaK triggers the release of the substrate protein, thus completing the reaction cycle. Several rounds of ATP-dependent interactions between DnaJ, DnaK and GrpE are required for fully efficient folding. In Stutzerimonas stutzeri (strain A1501) (Pseudomonas stutzeri), this protein is Protein GrpE.